A 216-amino-acid polypeptide reads, in one-letter code: FMN-dependent NADH:quinone oxidoreductase 3 (216 aa).

Residues Ser-10 and 16–18 (SAS) each bind FMN.

This sequence belongs to the azoreductase type 1 family. Homodimer. Requires FMN as cofactor.

The enzyme catalyses 2 a quinone + NADH + H(+) = 2 a 1,4-benzosemiquinone + NAD(+). It carries out the reaction N,N-dimethyl-1,4-phenylenediamine + anthranilate + 2 NAD(+) = 2-(4-dimethylaminophenyl)diazenylbenzoate + 2 NADH + 2 H(+). In terms of biological role, quinone reductase that provides resistance to thiol-specific stress caused by electrophilic quinones. Also exhibits azoreductase activity. Catalyzes the reductive cleavage of the azo bond in aromatic azo compounds to the corresponding amines. The protein is FMN-dependent NADH:quinone oxidoreductase 3 of Pseudomonas fluorescens (strain ATCC BAA-477 / NRRL B-23932 / Pf-5).